A 43-amino-acid polypeptide reads, in one-letter code: Large ribosomal subunit protein bL32 (43 aa).

Belongs to the bacterial ribosomal protein bL32 family.

The sequence is that of Large ribosomal subunit protein bL32 (rpmF) from Carsonella ruddii (strain PV).